The primary structure comprises 263 residues: Putative methyltransferase DDB_G0268948 (263 aa).

The protein belongs to the methyltransferase superfamily.

This is Putative methyltransferase DDB_G0268948 from Dictyostelium discoideum (Social amoeba).